A 391-amino-acid polypeptide reads, in one-letter code: GTPase Obg (391 aa).

Residues 1–159 (MKFIDEALIR…RDLLLELMLL (159 aa)) form the Obg domain. One can recognise an OBG-type G domain in the interval 160-333 (ADVGMLGLPN…LTRDIMDFIE (174 aa)). GTP contacts are provided by residues 166–173 (GLPNAGKS), 191–195 (FTTLV), 213–216 (DIPG), 283–286 (NKID), and 314–316 (SAA). Mg(2+) is bound by residues S173 and T193.

It belongs to the TRAFAC class OBG-HflX-like GTPase superfamily. OBG GTPase family. As to quaternary structure, monomer. Requires Mg(2+) as cofactor.

Its subcellular location is the cytoplasm. Its function is as follows. An essential GTPase which binds GTP, GDP and possibly (p)ppGpp with moderate affinity, with high nucleotide exchange rates and a fairly low GTP hydrolysis rate. Plays a role in control of the cell cycle, stress response, ribosome biogenesis and in those bacteria that undergo differentiation, in morphogenesis control. In Actinobacillus pleuropneumoniae serotype 5b (strain L20), this protein is GTPase Obg.